Here is a 613-residue protein sequence, read N- to C-terminus: Proline--tRNA ligase (613 aa).

The protein belongs to the class-II aminoacyl-tRNA synthetase family. ProS type 1 subfamily. As to quaternary structure, homodimer.

The protein resides in the cytoplasm. The catalysed reaction is tRNA(Pro) + L-proline + ATP = L-prolyl-tRNA(Pro) + AMP + diphosphate. In terms of biological role, catalyzes the attachment of proline to tRNA(Pro) in a two-step reaction: proline is first activated by ATP to form Pro-AMP and then transferred to the acceptor end of tRNA(Pro). As ProRS can inadvertently accommodate and process non-cognate amino acids such as alanine and cysteine, to avoid such errors it has two additional distinct editing activities against alanine. One activity is designated as 'pretransfer' editing and involves the tRNA(Pro)-independent hydrolysis of activated Ala-AMP. The other activity is designated 'posttransfer' editing and involves deacylation of mischarged Ala-tRNA(Pro). The misacylated Cys-tRNA(Pro) is not edited by ProRS. In Tropheryma whipplei (strain Twist) (Whipple's bacillus), this protein is Proline--tRNA ligase.